Consider the following 208-residue polypeptide: NAD(P)H-quinone oxidoreductase subunit I (208 aa).

2 4Fe-4S ferredoxin-type domains span residues 55 to 84 (GRIHYEFDKCIACEVCVRVCPINLPVVDWV) and 95 to 124 (RNYSIDFGVCIFCGNCVEYCPTNCLSMTEE). Positions 64, 67, 70, 74, 104, 107, 110, and 114 each coordinate [4Fe-4S] cluster.

It belongs to the complex I 23 kDa subunit family. In terms of assembly, NDH-1 is composed of at least 11 different subunits. [4Fe-4S] cluster serves as cofactor.

It is found in the cellular thylakoid membrane. The enzyme catalyses a plastoquinone + NADH + (n+1) H(+)(in) = a plastoquinol + NAD(+) + n H(+)(out). It carries out the reaction a plastoquinone + NADPH + (n+1) H(+)(in) = a plastoquinol + NADP(+) + n H(+)(out). Functionally, NDH-1 shuttles electrons from an unknown electron donor, via FMN and iron-sulfur (Fe-S) centers, to quinones in the respiratory and/or the photosynthetic chain. The immediate electron acceptor for the enzyme in this species is believed to be plastoquinone. Couples the redox reaction to proton translocation, and thus conserves the redox energy in a proton gradient. The protein is NAD(P)H-quinone oxidoreductase subunit I of Prochlorococcus marinus (strain MIT 9312).